A 385-amino-acid chain; its full sequence is S-adenosylmethionine synthase (385 aa).

ATP is bound at residue H16. D18 provides a ligand contact to Mg(2+). K(+) is bound at residue E44. Residues E57 and Q100 each contribute to the L-methionine site. The interval 100–110 (QSPDINQGVDR) is flexible loop. ATP is bound by residues 164 to 166 (DGK), 230 to 231 (KF), D239, 245 to 246 (RK), A262, and K266. Position 239 (D239) interacts with L-methionine. K270 is a binding site for L-methionine.

It belongs to the AdoMet synthase family. As to quaternary structure, homotetramer; dimer of dimers. Mg(2+) serves as cofactor. K(+) is required as a cofactor.

Its subcellular location is the cytoplasm. It catalyses the reaction L-methionine + ATP + H2O = S-adenosyl-L-methionine + phosphate + diphosphate. It participates in amino-acid biosynthesis; S-adenosyl-L-methionine biosynthesis; S-adenosyl-L-methionine from L-methionine: step 1/1. Catalyzes the formation of S-adenosylmethionine (AdoMet) from methionine and ATP. The overall synthetic reaction is composed of two sequential steps, AdoMet formation and the subsequent tripolyphosphate hydrolysis which occurs prior to release of AdoMet from the enzyme. The protein is S-adenosylmethionine synthase of Helicobacter pylori (strain J99 / ATCC 700824) (Campylobacter pylori J99).